We begin with the raw amino-acid sequence, 338 residues long: MNTEATHEENAPHTTGERLRLAREQLGLSQQVVAERLCLKVSTVRDIEEDKAPADLASTFLRGYIRSYARLVHVPEEELLPMLAKQAPVRTAQVAPMQTYALGKSRKKRDGWLMSFTWLVLFVVVGLTGAWWWQNHKAQQEEISTMADQSSAELSQNAANSPQSVPLNTDNTADASQDQATPPADLPSGDTQNTASNNPQPTPVPSSNTASQQPVVVPPSQANTDTAAQQNTTQPAQSQLPVGQASTAPAADANALVMNFTADCWLEVTDATGKKLFSGLQRKDTNLNLSGQAPYRLKIGAPSAVQIQYQGKPVDLSRFIRTNQVARLTLNAEQSVTQ.

At 1–111 (MNTEATHEEN…LGKSRKKRDG (111 aa)) the chain is on the cytoplasmic side. An HTH cro/C1-type domain is found at 19–71 (LRLAREQLGLSQQVVAERLCLKVSTVRDIEEDKAPADLASTFLRGYIRSYARL). The segment at residues 30–49 (QQVVAERLCLKVSTVRDIEE) is a DNA-binding region (H-T-H motif). The chain crosses the membrane as a helical; Signal-anchor for type II membrane protein span at residues 112-132 (WLMSFTWLVLFVVVGLTGAWW). Residues 133-338 (WQNHKAQQEE…TLNAEQSVTQ (206 aa)) are Periplasmic-facing. Composition is skewed to polar residues over residues 147-180 (ADQS…QDQA) and 189-214 (GDTQ…SQQP). The tract at residues 147 to 245 (ADQSSAELSQ…AQSQLPVGQA (99 aa)) is disordered. Over residues 220–239 (SQANTDTAAQQNTTQPAQSQ) the composition is skewed to low complexity.

Belongs to the RodZ family.

It is found in the cell inner membrane. Cytoskeletal protein that is involved in cell-shape control through regulation of the length of the long axis. The polypeptide is Cytoskeleton protein RodZ (Cronobacter sakazakii (strain ATCC BAA-894) (Enterobacter sakazakii)).